Reading from the N-terminus, the 103-residue chain is Trp operon repressor homolog (103 aa).

Residues glutamine 59 to serine 82 mediate DNA binding.

The protein belongs to the TrpR family. Homodimer.

It is found in the cytoplasm. This protein is an aporepressor. When complexed with L-tryptophan it binds the operator region of the trp operon and prevents the initiation of transcription. The sequence is that of Trp operon repressor homolog from Vibrio parahaemolyticus serotype O3:K6 (strain RIMD 2210633).